Consider the following 508-residue polypeptide: Anthranilate synthase component 1 (508 aa).

L-tryptophan is bound by residues S49 and 282–284; that span reads PYM. A chorismate-binding site is contributed by 317–318; the sequence is GT. E344 is a binding site for Mg(2+). Chorismate is bound by residues Y432, R452, 466–468, and G468; that span reads GAG. E481 contributes to the Mg(2+) binding site.

The protein belongs to the anthranilate synthase component I family. In terms of assembly, heterotetramer consisting of two non-identical subunits: a beta subunit (TrpG) and a large alpha subunit (TrpE). Mg(2+) is required as a cofactor.

The catalysed reaction is chorismate + L-glutamine = anthranilate + pyruvate + L-glutamate + H(+). Its pathway is amino-acid biosynthesis; L-tryptophan biosynthesis; L-tryptophan from chorismate: step 1/5. Feedback inhibited by tryptophan. Its function is as follows. Part of a heterotetrameric complex that catalyzes the two-step biosynthesis of anthranilate, an intermediate in the biosynthesis of L-tryptophan. In the first step, the glutamine-binding beta subunit (TrpG) of anthranilate synthase (AS) provides the glutamine amidotransferase activity which generates ammonia as a substrate that, along with chorismate, is used in the second step, catalyzed by the large alpha subunit of AS (TrpE) to produce anthranilate. In the absence of TrpG, TrpE can synthesize anthranilate directly from chorismate and high concentrations of ammonia. This is Anthranilate synthase component 1 (trpE) from Bacillus caldotenax.